A 212-amino-acid polypeptide reads, in one-letter code: Thymidylate kinase (212 aa).

11-18 (GLEGAGKS) is a binding site for ATP.

It belongs to the thymidylate kinase family.

It carries out the reaction dTMP + ATP = dTDP + ADP. Its function is as follows. Phosphorylation of dTMP to form dTDP in both de novo and salvage pathways of dTTP synthesis. The protein is Thymidylate kinase of Vibrio vulnificus (strain CMCP6).